Consider the following 710-residue polypeptide: Protein CNGC15a (710 aa).

6 helical membrane-spanning segments follow: residues 85–105 (IFLA…YLPV), 115–135 (SIGL…FYII), 174–194 (LWSD…AVIP), 207–226 (VVRL…IYPL), 248–268 (YLTL…LLSI), and 368–388 (AEIN…ALLI). 474–559 (LFDQMDDRML…WALDPRPTAV (86 aa)) provides a ligand contact to a nucleoside 3',5'-cyclic phosphate.

The protein belongs to the cyclic nucleotide-gated cation channel (TC 1.A.1.5) family. Interacts (via N-terminus) with DMI1 (via c-terminus). The Nod factor has no effect on this interaction, implying that the complex is maintained after activation. Expressed in roots, stems, leaves, flowers and pods.

The protein resides in the nucleus membrane. Functionally, cyclic nucleotide-gated channel involved in the establishment of both rhizobial and mycorrhizal associations. Required for full activation of nuclear-localized Ca(2+) oscillations by Nod and Myc factors. Simultaneous activation of the K(+)-permeable channel DMI1 and the Ca(2+) channel CNGC15 can give rise to sustained Ca(2+) oscillations. May function during fertilization in both female and male gametophytic Ca(2+) signaling. The protein is Protein CNGC15a of Medicago truncatula (Barrel medic).